The following is a 103-amino-acid chain: Pyrimidine/purine nucleoside phosphorylase (103 aa).

This sequence belongs to the nucleoside phosphorylase PpnP family.

The enzyme catalyses a purine D-ribonucleoside + phosphate = a purine nucleobase + alpha-D-ribose 1-phosphate. It carries out the reaction adenosine + phosphate = alpha-D-ribose 1-phosphate + adenine. The catalysed reaction is cytidine + phosphate = cytosine + alpha-D-ribose 1-phosphate. It catalyses the reaction guanosine + phosphate = alpha-D-ribose 1-phosphate + guanine. The enzyme catalyses inosine + phosphate = alpha-D-ribose 1-phosphate + hypoxanthine. It carries out the reaction thymidine + phosphate = 2-deoxy-alpha-D-ribose 1-phosphate + thymine. The catalysed reaction is uridine + phosphate = alpha-D-ribose 1-phosphate + uracil. It catalyses the reaction xanthosine + phosphate = alpha-D-ribose 1-phosphate + xanthine. Functionally, catalyzes the phosphorolysis of diverse nucleosides, yielding D-ribose 1-phosphate and the respective free bases. Can use uridine, adenosine, guanosine, cytidine, thymidine, inosine and xanthosine as substrates. Also catalyzes the reverse reactions. In Citrifermentans bemidjiense (strain ATCC BAA-1014 / DSM 16622 / JCM 12645 / Bem) (Geobacter bemidjiensis), this protein is Pyrimidine/purine nucleoside phosphorylase.